Here is a 371-residue protein sequence, read N- to C-terminus: Cytochrome b (371 aa).

4 consecutive transmembrane segments (helical) span residues 25 to 45, 69 to 90, 105 to 125, and 170 to 190; these read FGSM…FLSM, WMMQ…YMHI, WLSG…GYVL, and FFAL…VHIM. Residues His75 and His89 each contribute to the heme b site. Residues His174 and His188 each contribute to the heme b site. His193 contacts a ubiquinone. A run of 4 helical transmembrane segments spans residues 218 to 238, 280 to 300, 312 to 332, and 339 to 358; these read YKDL…VSFF, LGGA…PFTH, LMQF…WTAT, and FTTI…MSNP.

This sequence belongs to the cytochrome b family. In terms of assembly, the cytochrome bc1 complex contains 3 respiratory subunits (MT-CYB, CYC1 and UQCRFS1), 2 core proteins (UQCRC1 and UQCRC2) and probably 6 low-molecular weight proteins. The cofactor is heme b.

The protein resides in the mitochondrion inner membrane. In terms of biological role, component of the ubiquinol-cytochrome c reductase complex (complex III or cytochrome b-c1 complex) that is part of the mitochondrial respiratory chain. The b-c1 complex mediates electron transfer from ubiquinol to cytochrome c. Contributes to the generation of a proton gradient across the mitochondrial membrane that is then used for ATP synthesis. The polypeptide is Cytochrome b (MT-CYB) (Candoia carinata (Papuan tree boa)).